We begin with the raw amino-acid sequence, 148 residues long: 3-dehydroquinate dehydratase (148 aa).

The active-site Proton acceptor is Y23. N75, H81, and D88 together coordinate substrate. H101 (proton donor) is an active-site residue. Substrate is bound by residues 102-103 (LS) and R112.

Belongs to the type-II 3-dehydroquinase family. In terms of assembly, homododecamer.

The enzyme catalyses 3-dehydroquinate = 3-dehydroshikimate + H2O. The protein operates within metabolic intermediate biosynthesis; chorismate biosynthesis; chorismate from D-erythrose 4-phosphate and phosphoenolpyruvate: step 3/7. Functionally, catalyzes a trans-dehydration via an enolate intermediate. The sequence is that of 3-dehydroquinate dehydratase from Xanthomonas axonopodis pv. citri (strain 306).